The following is a 441-amino-acid chain: Pre-mRNA-splicing factor PRP46 (441 aa).

Disordered regions lie at residues 1–22 and 81–107; these read MPVA…NEPS and MGAS…LTNL. The segment covering 83–107 has biased composition (polar residues); the sequence is ASSSALTKHTPSASQPTTHDSLTNL. WD repeat units lie at residues 130 to 169, 172 to 211, 214 to 253, 256 to 295, 298 to 336, 339 to 379, and 388 to 427; these read GHQG…LRLT, GHIM…VVRH, GHLS…PVVV, GHKS…TMTT, HHKK…LVLN, DQNA…QSTQ, and ESEN…TAES.

The protein belongs to the WD repeat PRL1/PRL2 family. Associated with the spliceosome.

The protein resides in the cytoplasm. It localises to the nucleus. Involved in pre-mRNA splicing and required for cell cycle progression at G2/M. The sequence is that of Pre-mRNA-splicing factor PRP46 (PRP46) from Yarrowia lipolytica (strain CLIB 122 / E 150) (Yeast).